A 1179-amino-acid polypeptide reads, in one-letter code: Integrin alpha-1 (1179 aa).

The N-terminal stretch at 1-28 (MVPRRPASLEVTVACIWLLTVILGVCIS) is a signal peptide. Residues 29-1141 (FNVDVKNSMS…SKDGLPGRVP (1113 aa)) lie on the Extracellular side of the membrane. Residues 30-91 (NVDVKNSMSF…CPVGRERSMP (62 aa)) form an FG-GAP 1 repeat. The cysteines at positions 82 and 92 are disulfide-linked. Asparagine 100, asparagine 105, asparagine 112, asparagine 217, asparagine 317, asparagine 341, asparagine 402, asparagine 418, and asparagine 459 each carry an N-linked (GlcNAc...) asparagine glycan. Residues 101 to 160 (TSIPNVTEIKENMTFGSTLVTNPKGGFLACGPLYAYRCGHLHYTTGICSDVSPTFQVVNS) form an FG-GAP 2 repeat. The region spanning 175–364 (IVLDGSNSIY…LGERIFALEA (190 aa)) is the VWFA domain. The stretch at 365–417 (TADQSAASFEMEMSQTGFSAHYSQDWVMLGAVGAYDWNGTVVMQKANQIVIPH) is one FG-GAP 3 repeat. FG-GAP repeat units lie at residues 422–474 (QTEP…DGDV), 475–537 (NILQ…RFEY), 556–614 (SCTK…TIRK), and 618–678 (QRIP…FEPN). Ca(2+) is bound by residues aspartate 497, aspartate 499, aspartate 501, and aspartate 505. The N-linked (GlcNAc...) asparagine glycan is linked to asparagine 531. Residues aspartate 579, asparagine 581, aspartate 583, aspartate 587, aspartate 641, asparagine 643, aspartate 645, and aspartate 649 each contribute to the Ca(2+) site. Cysteine 687 and cysteine 696 are joined by a disulfide. Asparagine 698, asparagine 747, and asparagine 779 each carry an N-linked (GlcNAc...) asparagine glycan. A disulfide bond links cysteine 702 and cysteine 755. A disulfide bridge connects residues cysteine 807 and cysteine 813. N-linked (GlcNAc...) asparagine glycans are attached at residues asparagine 839, asparagine 882, asparagine 907, asparagine 938, asparagine 965, asparagine 973, and asparagine 1007. A disulfide bridge connects residues cysteine 877 and cysteine 885. 2 disulfides stabilise this stretch: cysteine 1029/cysteine 1062 and cysteine 1065/cysteine 1072. N-linked (GlcNAc...) asparagine glycans are attached at residues asparagine 1083, asparagine 1102, and asparagine 1113. Residues 1142-1164 (LWVILLSAFAGLLLLMLLILALW) traverse the membrane as a helical segment. Residues 1165-1179 (KIGFFKRPLKKKMEK) are Cytoplasmic-facing. A GFFKR motif motif is present at residues 1167–1171 (GFFKR).

Belongs to the integrin alpha chain family. In terms of assembly, heterodimer of an alpha and a beta subunit. Alpha-1 associates with beta-1. Interacts with RAB21. Interacts (via cytoplasmic domain) with PTPN2; activates PTPN2 phosphatase activity towards EGFR and negatively regulates EGF signaling.

The protein resides in the membrane. Integrin alpha-1/beta-1 is a receptor for laminin and collagen. It recognizes the proline-hydroxylated sequence G-F-P-G-E-R in collagen. Involved in anchorage-dependent, negative regulation of EGF-stimulated cell growth. The sequence is that of Integrin alpha-1 (Itga1) from Mus musculus (Mouse).